Consider the following 281-residue polypeptide: MSLSALESTINSAFDARDGISTSTKGEVREAVDQVLETLDKGEARVAERGADGKWKVNQWLKKAVLLSFRLNDMGVIPGGPGQATWWDKVPSKFEGWGENRFRDAGFRAVPGAVVRRSAFIAKNVVLMPSFVNLGAYVDESTMVDTWATVGSCAQIGKRVHISGGAGIGGVLEPLQAEPVIIEDDCFIGARSEVAEGVIVRKGAVLAMGVFLGASTKIVDRDTGEVFIGEVPEYSVVVPGALPGKPMKNGHIGPSTACAVIVKRVDERTRSKTSINELLRD.

Residues R108 and D145 each contribute to the substrate site.

Belongs to the transferase hexapeptide repeat family. Homotrimer.

It is found in the cytoplasm. The enzyme catalyses (S)-2,3,4,5-tetrahydrodipicolinate + succinyl-CoA + H2O = (S)-2-succinylamino-6-oxoheptanedioate + CoA. It participates in amino-acid biosynthesis; L-lysine biosynthesis via DAP pathway; LL-2,6-diaminopimelate from (S)-tetrahydrodipicolinate (succinylase route): step 1/3. The chain is 2,3,4,5-tetrahydropyridine-2,6-dicarboxylate N-succinyltransferase from Bradyrhizobium diazoefficiens (strain JCM 10833 / BCRC 13528 / IAM 13628 / NBRC 14792 / USDA 110).